Consider the following 424-residue polypeptide: Nicotinate phosphoribosyltransferase (424 aa).

His-242 is modified (phosphohistidine; by autocatalysis).

Belongs to the NAPRTase family. In terms of processing, transiently phosphorylated on a His residue during the reaction cycle. Phosphorylation strongly increases the affinity for substrates and increases the rate of nicotinate D-ribonucleotide production. Dephosphorylation regenerates the low-affinity form of the enzyme, leading to product release.

It carries out the reaction nicotinate + 5-phospho-alpha-D-ribose 1-diphosphate + ATP + H2O = nicotinate beta-D-ribonucleotide + ADP + phosphate + diphosphate. Its pathway is cofactor biosynthesis; NAD(+) biosynthesis; nicotinate D-ribonucleotide from nicotinate: step 1/1. Its function is as follows. Catalyzes the synthesis of beta-nicotinate D-ribonucleotide from nicotinate and 5-phospho-D-ribose 1-phosphate at the expense of ATP. In Bartonella bacilliformis (strain ATCC 35685 / KC583 / Herrer 020/F12,63), this protein is Nicotinate phosphoribosyltransferase.